Here is a 103-residue protein sequence, read N- to C-terminus: MANLSPDEAIELAYDIFLEMASDNLEPADILLFNLQFEERGAVEMVETSENWEQEIGVLIDPDAFAEVWIGLINQNDEMDDIFARFLISNDAENREYHVIWKS.

Belongs to the putative dsDNA mimic protein family.

In terms of biological role, may act as a double-stranded DNA (dsDNA) mimic. Probably regulates the activity of a dsDNA-binding protein. The polypeptide is Putative double-stranded DNA mimic protein HAPS_1002 (Glaesserella parasuis serovar 5 (strain SH0165) (Haemophilus parasuis)).